A 556-amino-acid polypeptide reads, in one-letter code: Large cysteine-rich periplasmic protein OmcB (556 aa).

Residues 1–22 (MSKLIRRVVTVLALTSMASCFA) form the signal peptide. A propeptide spanning residues 23–40 (SGGIEAAVAESLITKIVA) is cleaved from the precursor.

In terms of assembly, part of a disulfide cross-linked outer membrane complex (COMC) composed of the major outer membrane porin (MOMP), the small cysteine-rich protein (OmcA) and the large cysteine-rich periplasmic protein (OmcB).

Its subcellular location is the periplasm. Its function is as follows. In elementary bodies (EBs, the infectious stage, which is able to survive outside the host cell) provides the structural integrity of the outer envelope through disulfide cross-links with the small cysteine-rich protein and the major outer membrane porin. It has been described in publications as the Sarkosyl-insoluble COMC (Chlamydia outer membrane complex), and serves as the functional equivalent of peptidoglycan. This Chlamydia pneumoniae (Chlamydophila pneumoniae) protein is Large cysteine-rich periplasmic protein OmcB (omcB).